A 344-amino-acid polypeptide reads, in one-letter code: uncharacterized protein (344 aa).

Belongs to the glycosyltransferase 2 family.

In terms of biological role, may be involved in the production of the exopolysaccharide (EPS) component of the extracellular matrix during biofilm formation. EPS is responsible for the adhesion of chains of cells into bundles. This is an uncharacterized protein from Bacillus subtilis (strain 168).